The primary structure comprises 193 residues: Holliday junction branch migration complex subunit RuvA (193 aa).

The interval 1–63 (MIHHLKGQLI…EDSHTLYGFA (63 aa)) is domain I. Residues 64–142 (EKSEREIFRL…KVLGDDEVFV (79 aa)) are domain II. The flexible linker stretch occupies residues 143 to 145 (SQS). Residues 145-193 (SNTNKEEALSALEILGYNRRQAGKVVEKILKEDPESTVESIIKMALKKL) form a domain III region.

This sequence belongs to the RuvA family. In terms of assembly, homotetramer. Forms an RuvA(8)-RuvB(12)-Holliday junction (HJ) complex. HJ DNA is sandwiched between 2 RuvA tetramers; dsDNA enters through RuvA and exits via RuvB. An RuvB hexamer assembles on each DNA strand where it exits the tetramer. Each RuvB hexamer is contacted by two RuvA subunits (via domain III) on 2 adjacent RuvB subunits; this complex drives branch migration. In the full resolvosome a probable DNA-RuvA(4)-RuvB(12)-RuvC(2) complex forms which resolves the HJ.

The protein localises to the cytoplasm. Functionally, the RuvA-RuvB-RuvC complex processes Holliday junction (HJ) DNA during genetic recombination and DNA repair, while the RuvA-RuvB complex plays an important role in the rescue of blocked DNA replication forks via replication fork reversal (RFR). RuvA specifically binds to HJ cruciform DNA, conferring on it an open structure. The RuvB hexamer acts as an ATP-dependent pump, pulling dsDNA into and through the RuvAB complex. HJ branch migration allows RuvC to scan DNA until it finds its consensus sequence, where it cleaves and resolves the cruciform DNA. This is Holliday junction branch migration complex subunit RuvA from Christiangramia forsetii (strain DSM 17595 / CGMCC 1.15422 / KT0803) (Gramella forsetii).